The following is a 748-amino-acid chain: Disintegrin and metalloproteinase domain-containing protein 10 (748 aa).

Residues 1–19 (MVLLRVLILLLSWAAGMGG) form the signal peptide. Residues 20–213 (QYGNPLNKYI…NGPELLRKKR (194 aa)) constitute a propeptide that is removed on maturation. Residues 20–672 (QYGNPLNKYI…SPELYENIAE (653 aa)) lie on the Extracellular side of the membrane. The short motif at 171–178 (GGCADHSV) is the Cysteine switch element. C173 contacts Zn(2+). In terms of domain architecture, Peptidase M12B spans 220-456 (NTCQLYIQTD…KRNNCFVESG (237 aa)). 17 disulfides stabilise this stretch: C222/C313, C344/C451, C399/C435, C460/C495, C471/C484, C473/C479, C483/C515, C503/C511, C510/C536, C524/C543, C530/C562, C555/C567, C572/C598, C580/C607, C582/C597, C594/C639, and C632/C645. Residues N267 and N278 are each glycosylated (N-linked (GlcNAc...) asparagine). Residue H383 coordinates Zn(2+). Residue E384 is part of the active site. Residues H387 and H393 each coordinate Zn(2+). An N-linked (GlcNAc...) asparagine glycan is attached at N439. Residues 457-551 (QPICGNGMVE…LCPASDPKPN (95 aa)) form the Disintegrin domain. An N-linked (GlcNAc...) asparagine glycan is attached at N551. The chain crosses the membrane as a helical span at residues 673-693 (WIVAHWWAVLLMGIALIMLMA). Over 694–748 (GFIKICSVHTPSSNPKLPPPKPLPGTLKRRRPPQPIQQPQRQRPRESYQMGHMRR) the chain is Cytoplasmic. Residues 704–748 (PSSNPKLPPPKPLPGTLKRRRPPQPIQQPQRQRPRESYQMGHMRR) are disordered. Positions 708-715 (PKLPPPKP) match the SH3-binding motif. Position 719 is a phosphothreonine; by FAM20C (T719). The short motif at 722-728 (RRRPPQP) is the SH3-binding element. An interaction with AP2A1, AP2A2 and AP2M1 region spans residues 734–748 (RQRPRESYQMGHMRR).

As to quaternary structure, forms a ternary EFNA5-EPHA3-ADAM10 complex mediating EFNA5 extracellular domain shedding by ADAM10 which regulates the EFNA5-EPHA3 complex internalization and function, the cleavage occurs in trans, with ADAM10 and its substrate being on the membranes of opposing cells. Interacts with the clathrin adapter AP2 complex subunits AP2A1, AP2A2, AP2B1, and AP2M1; this interaction facilitates ADAM10 endocytosis from the plasma membrane during long-term potentiation in hippocampal neurons. Forms a ternary complex composed of ADAM10, EPHA4 and CADH1; within the complex, ADAM10 cleaves CADH1 which disrupts adherens junctions. Interacts with EPHA2. Interacts with NGF in a divalent cation-dependent manner. Interacts with TSPAN14; the interaction promotes ADAM10 maturation and cell surface expression. Interacts with TSPAN5, TSPAN10, TSPAN14, TSPAN15, TSPAN17 and TSPAN33; these interactions regulate ADAM10 substrate specificity, endocytosis and turnover. Interacts (via extracellular domain) with TSPAN33 (via extracellular domain) and (via cytoplasmic domain) with AFDN; interaction with TSPAN33 allows the docking of ADAM10 to zonula adherens through a PDZ11-dependent interaction between TSPAN33 and PLEKHA7 while interaction with AFDN locks ADAM10 at zonula adherens. Interacts with DLG1; this interaction recruits ADAM10 to the cell membrane during long-term depression in hippocampal neurons. Interacts (via extracellular domain) with BACE1 (via extracellular domain). Interacts with FAM171A1. (Microbial infection) Interacts with S.aureus hly; this interaction is necessary for toxin pore formation, disruption of focal adhesions and S.aureus hly-mediated cytotoxicity. The cofactor is Zn(2+). In terms of processing, the precursor is cleaved by furin and PCSK7. As to expression, expressed in the brain (at protein level). Expressed in spleen, lymph node, thymus, peripheral blood leukocyte, bone marrow, cartilage, chondrocytes and fetal liver.

It is found in the cell membrane. The protein resides in the golgi apparatus membrane. Its subcellular location is the cytoplasmic vesicle. It localises to the clathrin-coated vesicle. The protein localises to the cell projection. It is found in the axon. The protein resides in the dendrite. Its subcellular location is the cell junction. It localises to the adherens junction. The protein localises to the cytoplasm. The enzyme catalyses Endopeptidase of broad specificity.. With respect to regulation, catalytically inactive when the propeptide is intact and associated with the mature enzyme. The disintegrin and cysteine-rich regions modulate access of substrates to exerts an inhibitory effect on the cleavage of ADAM10 substrates. Functionally, transmembrane metalloprotease which mediates the ectodomain shedding of a myriad of transmembrane proteins, including adhesion proteins, growth factor precursors and cytokines being essential for development and tissue homeostasis. Associates with six members of the tetraspanin superfamily TspanC8 which regulate its exit from the endoplasmic reticulum and its substrate selectivity. Cleaves the membrane-bound precursor of TNF-alpha at '76-Ala-|-Val-77' to its mature soluble form. Responsible for the proteolytical release of soluble JAM3 from endothelial cells surface. Responsible for the proteolytic release of several other cell-surface proteins, including heparin-binding epidermal growth-like factor, ephrin-A2, CD44, CDH2 and for constitutive and regulated alpha-secretase cleavage of amyloid precursor protein (APP). Contributes to the normal cleavage of the cellular prion protein. Involved in the cleavage of the adhesion molecule L1 at the cell surface and in released membrane vesicles, suggesting a vesicle-based protease activity. Also controls the proteolytic processing of Notch and mediates lateral inhibition during neurogenesis. Required for the development of type 1 transitional B cells into marginal zone B cells, probably by cleaving Notch. Responsible for the FasL ectodomain shedding and for the generation of the remnant ADAM10-processed FasL (FasL APL) transmembrane form. Also cleaves the ectodomain of the integral membrane proteins CORIN and ITM2B. Mediates the proteolytic cleavage of LAG3, leading to release the secreted form of LAG3. Mediates the proteolytic cleavage of IL6R and IL11RA, leading to the release of secreted forms of IL6R and IL11RA. Enhances the cleavage of CHL1 by BACE1. Cleaves NRCAM. Cleaves TREM2, resulting in shedding of the TREM2 ectodomain. Involved in the development and maturation of glomerular and coronary vasculature. During development of the cochlear organ of Corti, promotes pillar cell separation by forming a ternary complex with CADH1 and EPHA4 and cleaving CADH1 at adherens junctions. May regulate the EFNA5-EPHA3 signaling. Regulates leukocyte transmigration as a sheddase for the adherens junction protein VE-cadherin/CDH5 in endothelial cells. In terms of biological role, (Microbial infection) Promotes the cytotoxic activity of S.aureus hly by binding to the toxin at zonula adherens and promoting formation of toxin pores. This chain is Disintegrin and metalloproteinase domain-containing protein 10, found in Homo sapiens (Human).